The chain runs to 458 residues: tRNA modification GTPase MnmE (458 aa).

(6S)-5-formyl-5,6,7,8-tetrahydrofolate contacts are provided by Arg-22, Glu-84, and Arg-123. The region spanning 220-379 (GIATAIIGRP…LEKAIADLFF (160 aa)) is the TrmE-type G domain. Residue Asn-230 coordinates K(+). GTP-binding positions include 230–235 (NVGKSS), 249–255 (TDIAGTT), and 274–277 (DTAG). Ser-234 is a binding site for Mg(2+). K(+) is bound by residues Thr-249, Ile-251, and Thr-254. Thr-255 contributes to the Mg(2+) binding site. (6S)-5-formyl-5,6,7,8-tetrahydrofolate is bound at residue Lys-458.

The protein belongs to the TRAFAC class TrmE-Era-EngA-EngB-Septin-like GTPase superfamily. TrmE GTPase family. In terms of assembly, homodimer. Heterotetramer of two MnmE and two MnmG subunits. Requires K(+) as cofactor.

Its subcellular location is the cytoplasm. Functionally, exhibits a very high intrinsic GTPase hydrolysis rate. Involved in the addition of a carboxymethylaminomethyl (cmnm) group at the wobble position (U34) of certain tRNAs, forming tRNA-cmnm(5)s(2)U34. The polypeptide is tRNA modification GTPase MnmE (Bacillus cytotoxicus (strain DSM 22905 / CIP 110041 / 391-98 / NVH 391-98)).